Consider the following 372-residue polypeptide: Methylthioribose-1-phosphate isomerase 1 (372 aa).

Asp254 functions as the Proton donor in the catalytic mechanism.

It belongs to the eIF-2B alpha/beta/delta subunits family. MtnA subfamily.

Its subcellular location is the cytoplasm. The protein resides in the nucleus. The enzyme catalyses 5-(methylsulfanyl)-alpha-D-ribose 1-phosphate = 5-(methylsulfanyl)-D-ribulose 1-phosphate. It functions in the pathway amino-acid biosynthesis; L-methionine biosynthesis via salvage pathway; L-methionine from S-methyl-5-thio-alpha-D-ribose 1-phosphate: step 1/6. Functionally, catalyzes the interconversion of methylthioribose-1-phosphate (MTR-1-P) into methylthioribulose-1-phosphate (MTRu-1-P). The protein is Methylthioribose-1-phosphate isomerase 1 of Trypanosoma cruzi (strain CL Brener).